The following is a 568-amino-acid chain: Phosphoprotein (568 aa).

Disordered stretches follow at residues 1–23 (MDQD…GGRE) and 38–320 (SEPT…GIGE). Over residues 7-20 (ILKEDSEVEREAPG) the composition is skewed to basic and acidic residues. Residues 33-41 (DAVLSSEPT) form an N0 binding region. The segment covering 50–59 (LHNTINTPQG) has biased composition (polar residues). The residue at position 68 (serine 68) is a Phosphoserine; by host. Over residues 83–101 (RSGEESRVSGRTSKPEAEA) the composition is skewed to basic and acidic residues. Phosphoserine; by host is present on serine 125. Residues 150-168 (GIEDENREMAAHPDKRGED) are compositionally biased toward basic and acidic residues. Positions 191 to 206 (ASNNGRSMEPGSSHSA) are enriched in polar residues. 4 positions are modified to phosphoserine; by host: serine 192, serine 249, serine 257, and serine 260. Residues 344–411 (FESSRDASYV…SFRDTYKRFS (68 aa)) form a multimerization region. Residues 364–429 (YAEMTFNVCG…LLMSNLSTLH (66 aa)) adopt a coiled-coil conformation. Residues 412-445 (EYQKEQNSLLMSNLSTLHIITDRGGKTDNTDSLT) form a l protein binding region. Phosphoserine; by host occurs at positions 447 and 449. Residues 479–568 (DLIREDEFRD…VEEDIESLTN (90 aa)) form an interaction with the nucleocapsid (N-RNA) region. The segment at 496-516 (QERDTEPRASNASRLLPSKEK) is disordered.

The protein belongs to the respirovirus P protein family. As to quaternary structure, homotetramer. Interacts (via multimerization domain) with polymerase L; this interaction forms the polymerase complex. Interacts (via N-terminus) with N0; this interaction allows P to chaperon N0 before encapsidation and form the N-P complex. Interacts (via C-terminus) with N-RNA template; this interaction positions the polymerase on the template. In terms of processing, phosphorylated by PKC/PRKCZ, and other unknown kinases. Phosphorylation is necessary for viral transcription and replication. The N-terminus contains the majority of phosphorylated sites. Ser-249 is the major site of phosphorylation, but is not necessary for most functions.

In terms of biological role, essential cofactor of the RNA polymerase L that plays a central role in the transcription and replication by forming the polymerase complex with RNA polymerase L and recruiting L to the genomic N-RNA template for RNA synthesis. Also plays a central role in the encapsidation of nascent RNA chains by forming the encapsidation complex with the nucleocapsid protein N (N-P complex). Acts as a chaperone for newly synthesized free N protein, so-called N0, allowing encapsidation of nascent RNA chains during replication. The nucleoprotein protein N prevents excessive phosphorylation of P, which leads to down-regulation of viral transcription/ replication. Participates, together with N, in the formation of viral factories (viroplasms), which are large inclusions in the host cytoplasm where replication takes place. Recruits host PI4KB and remodel the host endoplasmic reticulum membrane to form viral replication factories. The polypeptide is Phosphoprotein (P/V/C) (Sendai virus (strain Z) (SeV)).